The following is a 497-amino-acid chain: Low affinity K(+) transporter 1 (497 aa).

At 1 to 29 the chain is on the extracellular side; it reads MFNHDWKYSINSKTFADLNIELFRNHKFK. Residues 30–50 traverse the membrane as a helical segment; that stretch reads TVLNYIIGVVGWNGLKLALFV. Over 51–80 the chain is Cytoplasmic; it reads SDIYTCIKLLAFNSWSNNIIKPYLPFKISK. A helical transmembrane segment spans residues 81–101; sequence WLFSGCILASIVLLIWEAIAG. At 102–216 the chain is on the extracellular side; sequence MRIYKTGNIS…TNHEEAVILS (115 aa). A helical membrane pass occupies residues 217 to 237; that stretch reads LMLFSFIIWALFVFKFLLAVI. At 238–497 the chain is on the cytoplasmic side; that stretch reads CSIFVYYKII…EDEDRTYNYT (260 aa). A phosphoserine mark is found at Ser291 and Ser319. The tract at residues 420–469 is disordered; that stretch reads EFHGPLDSMPNTTNNIRNFNSNSSRPRPPPLQTKSSINSKADSNDNGRIY. The segment covering 429-444 has biased composition (low complexity); it reads PNTTNNIRNFNSNSSR. A compositionally biased stretch (polar residues) spans 451-465; that stretch reads QTKSSINSKADSNDN.

Belongs to the KCH1 low affinity K(+) transporter family.

It localises to the vacuole membrane. It is found in the cell membrane. The catalysed reaction is K(+)(in) = K(+)(out). Functionally, low affinity potassium transporter that, with PRM6/KCH2, participates in high-affinity Ca(2+) influx system (HACS) activation during the response to mating pheromone. Directly promotes K(+) influx and HACS may electrochemically respond to this K(+) influx. KCH1 and KCH2 act at the apex of the calcium signaling pathway that is used for survival during prolonged exposures to mating pheromones. The protein is Low affinity K(+) transporter 1 of Saccharomyces cerevisiae (strain ATCC 204508 / S288c) (Baker's yeast).